The chain runs to 320 residues: o-succinylbenzoate synthase (320 aa).

K133 acts as the Proton donor in catalysis. Residues D161, E190, and D213 each coordinate Mg(2+). K235 (proton acceptor) is an active-site residue.

The protein belongs to the mandelate racemase/muconate lactonizing enzyme family. MenC type 1 subfamily. A divalent metal cation is required as a cofactor.

It catalyses the reaction (1R,6R)-6-hydroxy-2-succinyl-cyclohexa-2,4-diene-1-carboxylate = 2-succinylbenzoate + H2O. It participates in quinol/quinone metabolism; 1,4-dihydroxy-2-naphthoate biosynthesis; 1,4-dihydroxy-2-naphthoate from chorismate: step 4/7. The protein operates within quinol/quinone metabolism; menaquinone biosynthesis. In terms of biological role, converts 2-succinyl-6-hydroxy-2,4-cyclohexadiene-1-carboxylate (SHCHC) to 2-succinylbenzoate (OSB). The sequence is that of o-succinylbenzoate synthase from Salmonella paratyphi B (strain ATCC BAA-1250 / SPB7).